Reading from the N-terminus, the 558-residue chain is Glucose-6-phosphate isomerase (558 aa).

Ala-2 carries the post-translational modification N-acetylalanine. Lys-12 is subject to N6-acetyllysine. Lys-34 carries the N6-(2-hydroxyisobutyryl)lysine modification. Phosphoserine is present on Ser-107. At Thr-109 the chain carries Phosphothreonine. Lys-142 is modified (N6-acetyllysine). 159–160 is a D-glucose 6-phosphate binding site; the sequence is GS. Residue Ser-185 is modified to Phosphoserine; by CK2. 210 to 215 serves as a coordination point for D-glucose 6-phosphate; it reads SKTFTT. Thr-250 bears the Phosphothreonine mark. Residues Gln-354, Glu-358, and His-389 each contribute to the D-glucose 6-phosphate site. Glu-358 (proton donor) is an active-site residue. His-389 is an active-site residue. Position 454 is an N6-acetyllysine; alternate (Lys-454). Lys-454 carries the post-translational modification N6-malonyllysine; alternate. Lys-454 carries the post-translational modification N6-succinyllysine; alternate. Phosphoserine is present on Ser-455. D-glucose 6-phosphate is bound at residue Lys-519. The active site involves Lys-519.

Belongs to the GPI family. As to quaternary structure, homodimer in the catalytically active form, monomer in the secreted form. Post-translationally, phosphorylation at Ser-185 by CK2 has been shown to decrease enzymatic activity and may contribute to secretion by a non-classical secretory pathway. In terms of processing, ISGylated.

It localises to the cytoplasm. It is found in the secreted. It carries out the reaction alpha-D-glucose 6-phosphate = beta-D-fructose 6-phosphate. It functions in the pathway carbohydrate degradation; glycolysis; D-glyceraldehyde 3-phosphate and glycerone phosphate from D-glucose: step 2/4. In the cytoplasm, catalyzes the conversion of glucose-6-phosphate to fructose-6-phosphate, the second step in glycolysis, and the reverse reaction during gluconeogenesis. Besides it's role as a glycolytic enzyme, also acts as a secreted cytokine: acts as an angiogenic factor (AMF) that stimulates endothelial cell motility. Acts as a neurotrophic factor, neuroleukin, for spinal and sensory neurons. It is secreted by lectin-stimulated T-cells and induces immunoglobulin secretion. This is Glucose-6-phosphate isomerase from Sus scrofa (Pig).